Reading from the N-terminus, the 299-residue chain is Tricarboxylate transport protein (299 aa).

Solcar repeat units follow at residues V10 to M97, T109 to L199, and L212 to M297. Helical transmembrane passes span F16–A36, I66–I86, I113–I133, G174–Y193, G215–L235, and G272–Y291.

The protein belongs to the mitochondrial carrier (TC 2.A.29) family.

It is found in the mitochondrion inner membrane. Functionally, transport of citrate across inner mitochondrial membrane. This Saccharomyces cerevisiae (strain ATCC 204508 / S288c) (Baker's yeast) protein is Tricarboxylate transport protein (CTP1).